The following is an 881-amino-acid chain: MSVRVRLAPSPTGNLHIGTARTAVFNWLFARNQKGKFILRIEDTDQERSRPEYTDNILEGLSWLGLEWDEGPFYQCQRYELYQKATQSLLDKGLAYRCYCTAAELEEMREAQKARKEAPRYDNRHRNLTDLEKKAFEAEGRQAVIRFRIDDDQIITWNDMVRGKVTWKGSDLGGDMVISRAAGGDEVGQPLYNMAVVVDDMDMEITHVIRGEDHIANTAKQILLYEALGGKIPEFGHTPLILNKEGRKLSKRDGVTSISDFQELGFTPEALANYMCLLGWTPPDATEEIFTLAQAGQNFSFERVNKAGAKFDWDKLDWISSQYLHNLPVKQLTDKLIPIWQKAGYELDPEGDRSWLEQLVTLIRPSLTRLTDAVEMSELFFFPTVELNEDAKTQMQNEDSVKSINSILEIINADAPLLVADVKQTIKKVTQKVHVKKGVVMRSLRASLTGAMQGPDLIESWLLLHQKGFDILRFKKSIGQEIEDTKIEDTKKAETTPHKSKGEGNVLLKTTTPKSPALSKEQTQTTKPPKKGQTATPVATTPTATDVTENTSVGTQETQSQITTPVATTPTATDVTENTSVGTQETQSQITTPVATTPTATDVTENTSVETQETQSQITTPVATTPTATDVTENTSVETQETQSQITTPVATTPTATDVTENTSVGTQETQSQITTPVATTPTATDVTENTSVETQETQSQITTPVATTSTATDVTENTSVETQETQSQITTPVATTPTATDAETREQKVATQVETSILDDQKPVDTVTNQTVEVEQPNKIKEQFINIFFNFPDYINQLYQQYQGQLKLFGWLALVILTFTFMAVVIEALDGIPILSIIFELIGVIYLVWFVYRYLLKRSNRQELLDKIENIKREIFGKPS.

The glutamyl-tRNA synthetase stretch occupies residues 1–480; that stretch reads MSVRVRLAPS…ILRFKKSIGQ (480 aa). Residues 9 to 19 carry the 'HIGH' region motif; that stretch reads PSPTGNLHIGT. Residues 248–252 carry the 'KMSKS' region motif; sequence KLSKR. ATP is bound at residue Lys-251. Residues 481–881 form a unknown region; the sequence is EIEDTKIEDT…IKREIFGKPS (401 aa). Basic and acidic residues predominate over residues 488–502; that stretch reads EDTKKAETTPHKSKG. A disordered region spans residues 488 to 747; it reads EDTKKAETTP…PTATDAETRE (260 aa). Residues 522-548 show a composition bias toward low complexity; that stretch reads QTQTTKPPKKGQTATPVATTPTATDVT. The segment covering 549–562 has biased composition (polar residues); it reads ENTSVGTQETQSQI. The span at 563–576 shows a compositional bias: low complexity; it reads TTPVATTPTATDVT. A compositionally biased stretch (polar residues) spans 577–590; it reads ENTSVGTQETQSQI. The segment covering 591–604 has biased composition (low complexity); it reads TTPVATTPTATDVT. Positions 605 to 618 are enriched in polar residues; that stretch reads ENTSVETQETQSQI. The span at 619-632 shows a compositional bias: low complexity; sequence TTPVATTPTATDVT. Residues 633–646 show a composition bias toward polar residues; sequence ENTSVETQETQSQI. Positions 647–660 are enriched in low complexity; it reads TTPVATTPTATDVT. The span at 661–674 shows a compositional bias: polar residues; sequence ENTSVGTQETQSQI. Residues 675 to 688 show a composition bias toward low complexity; the sequence is TTPVATTPTATDVT. Residues 689–702 are compositionally biased toward polar residues; that stretch reads ENTSVETQETQSQI. Over residues 703 to 720 the composition is skewed to low complexity; sequence TTPVATTSTATDVTENTS. Positions 721–730 are enriched in polar residues; that stretch reads VETQETQSQI. Low complexity predominate over residues 731 to 742; it reads TTPVATTPTATD. Helical transmembrane passes span 809–829 and 832–852; these read LFGW…VIEA and GIPI…VWFV.

This sequence belongs to the class-I aminoacyl-tRNA synthetase family. Glutamate--tRNA ligase type 1 subfamily. As to quaternary structure, monomer.

Its subcellular location is the cytoplasm. The protein resides in the cell membrane. It catalyses the reaction tRNA(Glu) + L-glutamate + ATP = L-glutamyl-tRNA(Glu) + AMP + diphosphate. In terms of biological role, catalyzes the attachment of glutamate to tRNA(Glu) in a two-step reaction: glutamate is first activated by ATP to form Glu-AMP and then transferred to the acceptor end of tRNA(Glu). This Trichodesmium erythraeum (strain IMS101) protein is Glutamate--tRNA ligase (gltX).